A 40-amino-acid chain; its full sequence is Photosystem II reaction center protein Y (40 aa).

Residues 5–23 form a helical membrane-spanning segment; sequence LVLVASPILLAVGWAGFNI.

This sequence belongs to the PsbY family. PSII is composed of 1 copy each of membrane proteins PsbA, PsbB, PsbC, PsbD, PsbE, PsbF, PsbH, PsbI, PsbJ, PsbK, PsbL, PsbM, PsbT, PsbX, PsbY, PsbZ, Psb30/Ycf12, peripheral proteins PsbO, CyanoQ (PsbQ), PsbU, PsbV and a large number of cofactors. It forms dimeric complexes.

It localises to the cellular thylakoid membrane. Loosely associated component of the core of photosystem II (PSII), it is not always seen in crystals. PSII is a light-driven water plastoquinone oxidoreductase, using light energy to abstract electrons from H(2)O, generating a proton gradient subsequently used for ATP formation. This is Photosystem II reaction center protein Y from Synechococcus sp. (strain RCC307).